The following is an 832-amino-acid chain: Polyphosphoinositide phosphatase (832 aa).

The SAC domain occupies 145 to 491; it reads IEKVDLARTF…GDAIALQYGG (347 aa).

Component of the PI(3,5)P2 regulatory complex. Mg(2+) serves as cofactor.

The protein localises to the cytoplasm. It is found in the vacuole membrane. The catalysed reaction is a 1,2-diacyl-sn-glycero-3-phospho-(1D-myo-inositol-3,5-bisphosphate) + H2O = a 1,2-diacyl-sn-glycero-3-phospho-(1D-myo-inositol-3-phosphate) + phosphate. Its function is as follows. The PI(3,5)P2 regulatory complex regulates both the synthesis and turnover of phosphatidylinositol 3,5-bisphosphate (PtdIns(3,5)P2). This Schizosaccharomyces pombe (strain 972 / ATCC 24843) (Fission yeast) protein is Polyphosphoinositide phosphatase.